We begin with the raw amino-acid sequence, 558 residues long: Dihydroxy-acid dehydratase (558 aa).

Residue Asp81 participates in Mg(2+) binding. Cys122 is a binding site for [2Fe-2S] cluster. Mg(2+)-binding residues include Asp123 and Lys124. At Lys124 the chain carries N6-carboxylysine. Cys195 serves as a coordination point for [2Fe-2S] cluster. A Mg(2+)-binding site is contributed by Glu447. Ser473 acts as the Proton acceptor in catalysis.

Belongs to the IlvD/Edd family. In terms of assembly, homodimer. [2Fe-2S] cluster serves as cofactor. Requires Mg(2+) as cofactor.

The catalysed reaction is (2R)-2,3-dihydroxy-3-methylbutanoate = 3-methyl-2-oxobutanoate + H2O. It catalyses the reaction (2R,3R)-2,3-dihydroxy-3-methylpentanoate = (S)-3-methyl-2-oxopentanoate + H2O. It participates in amino-acid biosynthesis; L-isoleucine biosynthesis; L-isoleucine from 2-oxobutanoate: step 3/4. It functions in the pathway amino-acid biosynthesis; L-valine biosynthesis; L-valine from pyruvate: step 3/4. Its function is as follows. Functions in the biosynthesis of branched-chain amino acids. Catalyzes the dehydration of (2R,3R)-2,3-dihydroxy-3-methylpentanoate (2,3-dihydroxy-3-methylvalerate) into 2-oxo-3-methylpentanoate (2-oxo-3-methylvalerate) and of (2R)-2,3-dihydroxy-3-methylbutanoate (2,3-dihydroxyisovalerate) into 2-oxo-3-methylbutanoate (2-oxoisovalerate), the penultimate precursor to L-isoleucine and L-valine, respectively. This chain is Dihydroxy-acid dehydratase, found in Bacillus pumilus (strain SAFR-032).